Here is a 373-residue protein sequence, read N- to C-terminus: 1-deoxy-D-xylulose 5-phosphate reductoisomerase (373 aa).

NADPH-binding residues include T10, G11, S12, I13, R37, and N112. K113 provides a ligand contact to 1-deoxy-D-xylulose 5-phosphate. E114 serves as a coordination point for NADPH. Position 134 (D134) interacts with Mn(2+). 4 residues coordinate 1-deoxy-D-xylulose 5-phosphate: S135, E136, S160, and H183. E136 provides a ligand contact to Mn(2+). G189 provides a ligand contact to NADPH. 4 residues coordinate 1-deoxy-D-xylulose 5-phosphate: S196, N201, K202, and E205. E205 is a Mn(2+) binding site.

The protein belongs to the DXR family. Requires Mg(2+) as cofactor. Mn(2+) is required as a cofactor.

The enzyme catalyses 2-C-methyl-D-erythritol 4-phosphate + NADP(+) = 1-deoxy-D-xylulose 5-phosphate + NADPH + H(+). It participates in isoprenoid biosynthesis; isopentenyl diphosphate biosynthesis via DXP pathway; isopentenyl diphosphate from 1-deoxy-D-xylulose 5-phosphate: step 1/6. Its function is as follows. Catalyzes the NADPH-dependent rearrangement and reduction of 1-deoxy-D-xylulose-5-phosphate (DXP) to 2-C-methyl-D-erythritol 4-phosphate (MEP). This is 1-deoxy-D-xylulose 5-phosphate reductoisomerase from Persephonella marina (strain DSM 14350 / EX-H1).